The sequence spans 249 residues: DNA polymerase sliding clamp (249 aa).

This sequence belongs to the PCNA family. In terms of assembly, the subunits circularize to form a toroid; DNA passes through its center. Replication factor C (RFC) is required to load the toroid on the DNA. Homotrimer. Interacts with NucS.

In terms of biological role, sliding clamp subunit that acts as a moving platform for DNA processing. Responsible for tethering the catalytic subunit of DNA polymerase and other proteins to DNA during high-speed replication. Regulates activity of NucS endonuclease and prevents non-specific cleavage. The protein is DNA polymerase sliding clamp of Pyrococcus abyssi (strain GE5 / Orsay).